We begin with the raw amino-acid sequence, 88 residues long: UPF0297 protein GTNG_2488 (88 aa).

It belongs to the UPF0297 family.

The protein is UPF0297 protein GTNG_2488 of Geobacillus thermodenitrificans (strain NG80-2).